Here is a 262-residue protein sequence, read N- to C-terminus: Trypsin theta (262 aa).

The first 19 residues, 1-19 (MHGLVVLLVCLAVGSAFAG), serve as a signal peptide directing secretion. Positions 20–34 (TIGVSNADPFEREGR) are cleaved as a propeptide — activation peptide. In terms of domain architecture, Peptidase S1 spans 35–260 (IVGGEDTTIR…LRKWILNASQ (226 aa)). C61 and C77 are disulfide-bonded. Residues H76 and D121 each act as charge relay system in the active site. 2 disulfides stabilise this stretch: C186-C203 and C212-C236. Residue S216 is the Charge relay system of the active site.

The protein belongs to the peptidase S1 family.

The protein localises to the secreted. The protein resides in the extracellular space. It carries out the reaction Preferential cleavage: Arg-|-Xaa, Lys-|-Xaa.. The sequence is that of Trypsin theta (thetaTry) from Drosophila erecta (Fruit fly).